A 343-amino-acid chain; its full sequence is Probable siderophore transport system permease protein YfhA (343 aa).

9 helical membrane-spanning segments follow: residues tryptophan 15 to leucine 35, isoleucine 69 to leucine 89, proline 97 to phenylalanine 117, tryptophan 130 to alanine 150, leucine 160 to isoleucine 180, glutamine 204 to leucine 224, phenylalanine 249 to isoleucine 269, glycine 289 to valine 309, and valine 317 to leucine 337.

The protein belongs to the binding-protein-dependent transport system permease family. FecCD subfamily. The complex is composed of one ATP-binding protein (YusV), two transmembrane proteins (YfiZ and YfhA) and a solute-binding protein (YfiY).

The protein localises to the cell membrane. Its function is as follows. Part of the ABC transporter complex YfiYZ/YfhA/YusV involved in import of the iron-hydroxamate siderophores schizokinen, arthrobactin and corprogen. This is Probable siderophore transport system permease protein YfhA (yfhA) from Bacillus subtilis (strain 168).